A 540-amino-acid chain; its full sequence is Cytochrome P450 27C1 (540 aa).

Position 486 (C486) interacts with heme.

Belongs to the cytochrome P450 family. The cofactor is heme. In terms of tissue distribution, following L-thyroxine, expressed in the retinal pigment epithelium (at protein level).

It is found in the membrane. It carries out the reaction all-trans-retinol + 2 reduced [adrenodoxin] + O2 + 2 H(+) = all-trans-3,4-didehydroretinol + 2 oxidized [adrenodoxin] + 2 H2O. Efficiently catalyzes the conversion of all-trans retinol (also called vitamin A1, the precursor of 11-cis retinal) to 3,4-didehydroretinol (also called vitamin A2, the precursor of 11-cis 3,4-didehydroretinal). Also acts on all-trans retinal and all-trans retinoic acid. The replacement of 11-cis retinal chromophore in photopigments with 11-cis 3,4-didehydroretinal enhances sensitivity to long-wavelength light. This may improve vision in fresh water which is often turbid. The chain is Cytochrome P450 27C1 (cyp27c1) from Danio rerio (Zebrafish).